The following is a 479-amino-acid chain: Putative F-box protein At1g67390 (479 aa).

Residues 40-88 (DDRISKLPDDVLVMILASLSTEDALKTSVLSTRWKNVWKQVPYLHFDLL) form the F-box domain.

The chain is Putative F-box protein At1g67390 from Arabidopsis thaliana (Mouse-ear cress).